A 776-amino-acid polypeptide reads, in one-letter code: Serine/threonine-protein kinase SIK1 (776 aa).

The Protein kinase domain occupies 27–278 (YDVERTLGKG…IAQIRQHRWM (252 aa)). Residues 33 to 41 (LGKGNFAVV) and Lys-56 each bind ATP. The active-site Proton acceptor is Asp-149. At Thr-182 the chain carries Phosphothreonine; by LKB1 and GSK3-beta. A Phosphoserine; by autocatalysis modification is found at Ser-186. In terms of domain architecture, UBA spans 303-343 (DYNEQVLGIMQALGIDRQRTVESLQNSSYNHFAAIYYLLLE). The residue at position 322 (Thr-322) is a Phosphothreonine; by CaMK1. 2 disordered regions span residues 350–371 (STQP…RNSD) and 449–472 (EARQ…STGR). At Ser-577 the chain carries Phosphoserine; by PKA. The interval 586–612 (KAFRQQLRKNARTKGFLGLNKIKGLAR) is RK-rich region. The segment at 621 to 643 (GSRGGMSTFHTPAPSSGLQGCTA) is disordered. Residues 628–643 (TFHTPAPSSGLQGCTA) are compositionally biased toward polar residues.

It belongs to the protein kinase superfamily. CAMK Ser/Thr protein kinase family. AMPK subfamily. In terms of assembly, interacts (when phosphorylated on Thr-182 and Ser-186) with YWHAZ. Interacts with ATP1A1. The cofactor is Mg(2+). In terms of processing, phosphorylated at Thr-182 by STK11/LKB1 in complex with STE20-related adapter-alpha (STRADA) pseudo kinase and CAB39, leading to its activation. Phosphorylation at Thr-182 promotes autophosphorylation at Ser-186, which is required for sustained activity. Autophosphorylation at Ser-186 is maintained by sequential phosphorylation at Thr-182 by GSK3-beta. GSK3-beta cannot initiate phosphorylation at Thr-182, it can only maintain it. Phosphorylation at Ser-577 by PKA promotes translocation to the cytoplasm. Phosphorylation at Thr-322 by CaMK1 following intracellular sodium concentration leads to activation.

The protein resides in the cytoplasm. It is found in the nucleus. The enzyme catalyses L-seryl-[protein] + ATP = O-phospho-L-seryl-[protein] + ADP + H(+). It catalyses the reaction L-threonyl-[protein] + ATP = O-phospho-L-threonyl-[protein] + ADP + H(+). Activated by phosphorylation on Thr-182. Also activated by phosphorylation on Thr-322 in response to increases in intracellular sodium in parallel with elevations in intracellular calcium through the reversible sodium/calcium exchanger. Its function is as follows. Serine/threonine-protein kinase involved in various processes such as cell cycle regulation, gluconeogenesis and lipogenesis regulation, muscle growth and differentiation and tumor suppression. Phosphorylates HDAC4, HDAC5, PPME1, SREBF1, CRTC1/TORC1 and CRTC2/TORC2. Acts as a tumor suppressor and plays a key role in p53/TP53-dependent anoikis, a type of apoptosis triggered by cell detachment: required for phosphorylation of p53/TP53 in response to loss of adhesion and is able to suppress metastasis. Part of a sodium-sensing signaling network, probably by mediating phosphorylation of PPME1: following increases in intracellular sodium, SIK1 is activated by CaMK1 and phosphorylates PPME1 subunit of protein phosphatase 2A (PP2A), leading to dephosphorylation of sodium/potassium-transporting ATPase ATP1A1 and subsequent increase activity of ATP1A1. Acts as a regulator of muscle cells by phosphorylating and inhibiting class II histone deacetylases HDAC4 and HDAC5, leading to promote expression of MEF2 target genes in myocytes. Also required during cardiomyogenesis by regulating the exit of cardiomyoblasts from the cell cycle via down-regulation of CDKN1C/p57Kip2. Acts as a regulator of hepatic gluconeogenesis by phosphorylating and repressing the CREB-specific coactivators CRTC1/TORC1 and CRTC2/TORC2, leading to inhibit CREB activity. Also regulates hepatic lipogenesis by phosphorylating and inhibiting SREBF1. In concert with CRTC1/TORC1, regulates the light-induced entrainment of the circadian clock by attenuating PER1 induction; represses CREB-mediated transcription of PER1 by phosphorylating and deactivating CRTC1/TORC1. The protein is Serine/threonine-protein kinase SIK1 (Sik1) of Rattus norvegicus (Rat).